Consider the following 530-residue polypeptide: Protein SLOW WALKER 1 (530 aa).

WD repeat units lie at residues 50-89 (NLVSSVAALAFSPVHPHSLAVAHSATVSLFSSQSLSSSRR), 91-130 (SFRDVVSSVCFRSDGALFAACDLSGVVQVFDIKERMALRT), 133-173 (SHSA…VISD), 176-216 (GHKD…SNWI), 220-258 (NHGLPVEDVVYLPSGGLIATAGGNSVKVWDLIGGGKMVC), 262-304 (SHNK…VTYS), and 320-363 (GSTR…DESR). Residues 392–399 (EKKGLKLT) carry the Nuclear localization signal motif.

Expressed in cells undergoing active cell divisions, including functional megaspores and the female gametophytic cells. Accumulates in roots, stems, leaves, inflorescences and siliques.

It is found in the nucleus. It localises to the nucleolus. Essential protein required for nuclear division and organization during embryo sac development in female gametophyte, probably by promoting rRNA biogenesis essential for the progression of the mitotic division cycles during gametogenesis. Involved in nucleolar processing of pre-18S ribosomal RNA. The polypeptide is Protein SLOW WALKER 1 (Arabidopsis thaliana (Mouse-ear cress)).